Reading from the N-terminus, the 357-residue chain is Glycerol-3-phosphate dehydrogenase [NAD(P)+] (357 aa).

Residues Ser30, Phe31, Arg51, and Lys124 each contribute to the NADPH site. Sn-glycerol 3-phosphate is bound by residues Lys124 and Gly152. Ala156 contacts NADPH. 5 residues coordinate sn-glycerol 3-phosphate: Lys207, Asp260, Ser270, Arg271, and Asn272. The Proton acceptor role is filled by Lys207. Arg271 contacts NADPH. NADPH is bound at residue Glu297.

It belongs to the NAD-dependent glycerol-3-phosphate dehydrogenase family.

It localises to the cytoplasm. The enzyme catalyses sn-glycerol 3-phosphate + NAD(+) = dihydroxyacetone phosphate + NADH + H(+). It catalyses the reaction sn-glycerol 3-phosphate + NADP(+) = dihydroxyacetone phosphate + NADPH + H(+). It functions in the pathway membrane lipid metabolism; glycerophospholipid metabolism. In terms of biological role, catalyzes the reduction of the glycolytic intermediate dihydroxyacetone phosphate (DHAP) to sn-glycerol 3-phosphate (G3P), the key precursor for phospholipid synthesis. This Acinetobacter baylyi (strain ATCC 33305 / BD413 / ADP1) protein is Glycerol-3-phosphate dehydrogenase [NAD(P)+].